A 291-amino-acid polypeptide reads, in one-letter code: Ribosomal RNA small subunit methyltransferase H (291 aa).

S-adenosyl-L-methionine contacts are provided by residues 36-38, D55, A90, D102, and Q109; that span reads GGH.

The protein belongs to the methyltransferase superfamily. RsmH family.

It is found in the cytoplasm. It carries out the reaction cytidine(1402) in 16S rRNA + S-adenosyl-L-methionine = N(4)-methylcytidine(1402) in 16S rRNA + S-adenosyl-L-homocysteine + H(+). In terms of biological role, specifically methylates the N4 position of cytidine in position 1402 (C1402) of 16S rRNA. This chain is Ribosomal RNA small subunit methyltransferase H, found in Thermosipho africanus (strain TCF52B).